A 512-amino-acid polypeptide reads, in one-letter code: Cytochrome P450 26B1 (512 aa).

Cys-441 serves as a coordination point for heme.

This sequence belongs to the cytochrome P450 family. It depends on heme as a cofactor.

The protein resides in the endoplasmic reticulum membrane. It localises to the microsome membrane. The catalysed reaction is all-trans-retinoate + reduced [NADPH--hemoprotein reductase] + O2 = all-trans-4-hydroxyretinoate + oxidized [NADPH--hemoprotein reductase] + H2O + H(+). The enzyme catalyses all-trans-retinoate + reduced [NADPH--hemoprotein reductase] + O2 = all-trans-18-hydroxyretinoate + oxidized [NADPH--hemoprotein reductase] + H2O + H(+). Functionally, a cytochrome P450 monooxygenase involved in the metabolism of retinoates (RAs), the active metabolites of vitamin A, and critical signaling molecules in animals. RAs exist as at least four different isomers: all-trans-RA (atRA), 9-cis-RA, 13-cis-RA, and 9,13-dicis-RA, where atRA is considered to be the biologically active isomer, although 9-cis-RA and 13-cis-RA also have activity. Catalyzes the hydroxylation of atRA primarily at C-4 and C-18, thereby contributing to the regulation of atRA homeostasis and signaling. Hydroxylation of atRA limits its biological activity and initiates a degradative process leading to its eventual elimination. Involved in the convertion of atRA to all-trans-4-oxo-RA. Can oxidize all-trans-13,14-dihydroretinoate (DRA) to metabolites which could include all-trans-4-oxo-DRA, all-trans-4-hydroxy-DRA, all-trans-5,8-epoxy-DRA, and all-trans-18-hydroxy-DRA. Shows preference for the following substrates: atRA &gt; 9-cis-RA &gt; 13-cis-RA. Plays a central role in germ cell development: acts by degrading RAs in the developing testis, preventing STRA8 expression, thereby leading to delay of meiosis. Required for the maintenance of the undifferentiated state of male germ cells during embryonic development in Sertoli cells, inducing arrest in G0 phase of the cell cycle and preventing meiotic entry. Plays a role in skeletal development, both at the level of patterning and in the ossification of bone and the establishment of some synovial joints. Essential for postnatal survival. In terms of biological role, also has a significant activity in oxidation of tazarotenic acid and may therefore metabolize that xenobiotic in vivo. In Bos taurus (Bovine), this protein is Cytochrome P450 26B1 (CYP26B1).